A 236-amino-acid chain; its full sequence is Small ribosomal subunit protein uS2c (236 aa).

Belongs to the universal ribosomal protein uS2 family.

It is found in the plastid. It localises to the chloroplast. The protein is Small ribosomal subunit protein uS2c (rps2) of Nandina domestica (Heavenly bamboo).